A 119-amino-acid chain; its full sequence is Parathyroid hormone (119 aa).

A signal peptide spans 1–25; that stretch reads MTSTKNLAKAIVILYAICFFTNSDG. Residues 26–31 constitute a propeptide that is removed on maturation; the sequence is RPMMKR.

Belongs to the parathyroid hormone family. Interacts with PTH1R (via N-terminal extracellular domain).

It is found in the secreted. In terms of biological role, parathyroid hormone elevates calcium level by dissolving the salts in bone and preventing their renal excretion. Acts by binding to its receptor, PTH1R, activating G protein-coupled receptor signaling. Stimulates [1-14C]-2-deoxy-D-glucose (2DG) transport and glycogen synthesis in osteoblastic cells. The protein is Parathyroid hormone of Gallus gallus (Chicken).